The following is a 54-amino-acid chain: Large ribosomal subunit protein bL32c (54 aa).

The protein belongs to the bacterial ribosomal protein bL32 family.

Its subcellular location is the plastid. The protein localises to the chloroplast. This chain is Large ribosomal subunit protein bL32c, found in Piper cenocladum (Ant piper).